A 388-amino-acid polypeptide reads, in one-letter code: Calcium-binding and spermatid-specific protein 1 (388 aa).

The tract at residues 1–20 is disordered; it reads MAEDGLPKIYSHPPAESTKT. Thr280 carries the post-translational modification Phosphothreonine; by CK2. Residues Ser312 and Ser344 each carry the phosphoserine modification.

The protein localises to the cytoplasm. It localises to the mitochondrion inner membrane. It is found in the cell projection. Its subcellular location is the cilium. The protein resides in the flagellum. The protein localises to the cytoplasmic vesicle. It localises to the secretory vesicle. It is found in the acrosome. Functionally, calcium-binding protein. Essential for maintaining the structural integrity of the sperm flagella. The sequence is that of Calcium-binding and spermatid-specific protein 1 (CABS1) from Bos taurus (Bovine).